Here is a 121-residue protein sequence, read N- to C-terminus: Ribosome-binding factor A (121 aa).

It belongs to the RbfA family. Monomer. Binds 30S ribosomal subunits, but not 50S ribosomal subunits or 70S ribosomes.

Its subcellular location is the cytoplasm. In terms of biological role, one of several proteins that assist in the late maturation steps of the functional core of the 30S ribosomal subunit. Associates with free 30S ribosomal subunits (but not with 30S subunits that are part of 70S ribosomes or polysomes). Required for efficient processing of 16S rRNA. May interact with the 5'-terminal helix region of 16S rRNA. In Oenococcus oeni (strain ATCC BAA-331 / PSU-1), this protein is Ribosome-binding factor A.